Consider the following 693-residue polypeptide: Polyribonucleotide nucleotidyltransferase (693 aa).

Residues aspartate 489 and aspartate 495 each coordinate Mg(2+). The region spanning 556-615 (PQIHVMNINPAKIKDVVGRGGATVKGIVEKTGAQIDTSDSGEVKVFAKDKKSMDMAVAMI) is the KH domain. Positions 625 to 693 (GQVYKGKIVK…GRVKLSLVAR (69 aa)) constitute an S1 motif domain.

This sequence belongs to the polyribonucleotide nucleotidyltransferase family. Component of the RNA degradosome, which is a multiprotein complex involved in RNA processing and mRNA degradation. It depends on Mg(2+) as a cofactor.

Its subcellular location is the cytoplasm. The catalysed reaction is RNA(n+1) + phosphate = RNA(n) + a ribonucleoside 5'-diphosphate. Its function is as follows. Involved in mRNA degradation. Catalyzes the phosphorolysis of single-stranded polyribonucleotides processively in the 3'- to 5'-direction. The sequence is that of Polyribonucleotide nucleotidyltransferase from Francisella tularensis subsp. tularensis (strain FSC 198).